Consider the following 294-residue polypeptide: NAD kinase (294 aa).

Residue Asp73 is the Proton acceptor of the active site. NAD(+)-binding positions include 73-74, 147-148, Arg175, Asp177, and 188-193; these read DG, ND, and TAYALS.

The protein belongs to the NAD kinase family. The cofactor is a divalent metal cation.

It localises to the cytoplasm. It carries out the reaction NAD(+) + ATP = ADP + NADP(+) + H(+). In terms of biological role, involved in the regulation of the intracellular balance of NAD and NADP, and is a key enzyme in the biosynthesis of NADP. Catalyzes specifically the phosphorylation on 2'-hydroxyl of the adenosine moiety of NAD to yield NADP. This is NAD kinase from Nitrosospira multiformis (strain ATCC 25196 / NCIMB 11849 / C 71).